Reading from the N-terminus, the 349-residue chain is tRNA pseudouridine synthase D (349 aa).

Phe-27 is a substrate binding site. The Nucleophile role is filled by Asp-80. Position 129 (Asn-129) interacts with substrate. The 149-residue stretch at 155 to 303 (GVPNYFGAQR…VEAARRAMLL (149 aa)) folds into the TRUD domain. Phe-329 is a binding site for substrate.

It belongs to the pseudouridine synthase TruD family.

The enzyme catalyses uridine(13) in tRNA = pseudouridine(13) in tRNA. Its function is as follows. Responsible for synthesis of pseudouridine from uracil-13 in transfer RNAs. In Shigella boydii serotype 18 (strain CDC 3083-94 / BS512), this protein is tRNA pseudouridine synthase D.